Here is a 747-residue protein sequence, read N- to C-terminus: MAPDSGPFPDGQFLKLLPVDPRDRGTQRCRLGPAAFRSLGVRLGSPMRISLPAGGCCLCTAWPRRDGADGFVQLDLQCASPGAAAAAGRISMDRLQPVSCPPLRRLEVWPVLRPQAGAPSSDAVLEVSQELLRNRPVSRGHVVATPPGIPGPVAALHVVSGTPDPEPAGRVTPHTRITLSDKPPPQVEPPGEVTLGGLSETADSLRELLRLPLCYPLALAALGLAVPRGVLLAGPPGVGKTQLVRAVAREAGAELLAVSAPALQGTRPGETEENVRRVFQRAQELASRGPSLLFLDEVDALCPRRGGPQRAPESRVVAQVLTLLDGIHGDREVVVVGATNRPDELDPALRRPGRFDREVIIGTPTLKQREAILGVITSKMPISSHIDLGLLAEMTVGYVGADLTALCREAATCALLKNEKNQNNPKIEETDFLEAFKKVQPSSFRSSIGLTDIRPVGWEQIGGLEDVKLKLKQCVEWPLKFPQEFARMGLTQPKGLLLYGPPGCAKTTLVRALATSCHCSFVSVCGADLFSPFVGDSEKVLSQVFRQARANTPALVFLDEIDSVLGSRSVGSSGCDARERVLSVLLNELDGVGVRTVERRGSKASQQECQEILSRSVMIVVATNRPDVLDDALLRPGRLDKMVYVPPPDREGRLSILKVCTNNMPIGLNVSLENLAAETCYFSGADLRNLCKEAALFALQENGLEATTVEQEHFTEALKTVKPSLTLKDLTFYENLFKKELSNLEDH.

Position 1 is an N-acetylmethionine (Met1). Residues 234–241 and 500–507 each bind ATP; these read GPPGVGKT and GPPGCAKT.

It belongs to the AAA ATPase family. AFG2 subfamily. In terms of assembly, part of the 55LCC heterohexameric ATPase complex composed at least of AIRIM, AFG2A, AFG2B and CINP. Associates with pre-60S ribosomal particles. As to expression, expressed in neurons; also expressed at lower level in astrocytes, oligodendrocytes and microglia.

The protein localises to the cytoplasm. It is found in the cytoskeleton. It localises to the spindle. The protein resides in the nucleus. It catalyses the reaction ATP + H2O = ADP + phosphate + H(+). In the context of 55LCC heterohexameric ATPase complex, the ATPase activity is stimulated by DNA binding and inhibited in presence of RNA. Its function is as follows. ATP-dependent chaperone part of the 55LCC heterohexameric ATPase complex which is chromatin-associated and promotes replisome proteostasis to maintain replication fork progression and genome stability. Required for replication fork progression, sister chromatid cohesion, and chromosome stability. The ATPase activity is specifically enhanced by replication fork DNA and is coupled to cysteine protease-dependent cleavage of replisome substrates in response to replication fork damage. Uses ATPase activity to process replisome substrates in S-phase, facilitating their proteolytic turnover from chromatin to ensure DNA replication and mitotic fidelity. Plays an essential role in the cytoplasmic maturation steps of pre-60S ribosomal particles by promoting the release of shuttling protein RSL24D1/RLP24 from the pre-ribosomal particles. This is ATPase family gene 2 protein homolog B (Afg2b) from Rattus norvegicus (Rat).